Here is a 354-residue protein sequence, read N- to C-terminus: Guanine nucleotide-binding protein G(i) subunit alpha-3 (354 aa).

Residue G2 is the site of N-myristoyl glycine attachment. Residue C3 is the site of S-palmitoyl cysteine attachment. Residues 32 to 354 (KEVKLLLLGA…KNNLKECGLY (323 aa)) form the G-alpha domain. The segment at 35–48 (KLLLLGAGESGKST) is G1 motif. Residues G42, E43, S44, G45, K46, S47, T48, D150, S151, L175, R176, T177, R178, V179, K180, T181, V201, and G203 each contribute to the GTP site. 6 residues coordinate GDP: E43, S44, G45, K46, S47, and T48. S47 is a binding site for Mg(2+). Positions 151, 175, 176, 177, and 178 each coordinate GDP. The segment at 173-181 (DVLRTRVKT) is G2 motif. R178 is subject to ADP-ribosylarginine; by cholera toxin. T181 is a binding site for Mg(2+). A G3 motif region spans residues 196–205 (FKMFDVGGQR). Q204 carries the deamidated glutamine; by Photorhabdus PAU_02230 modification. Residues 265–272 (ILFLNKKD) form a G4 motif region. Residues N269, K270, D272, L273, C325, A326, and T327 each coordinate GTP. GDP is bound by residues N269, K270, and D272. The tract at residues 324–329 (TCATDT) is G5 motif. GDP-binding residues include C325 and A326. C351 carries the ADP-ribosylcysteine; by pertussis toxin modification.

It belongs to the G-alpha family. G(i/o/t/z) subfamily. As to quaternary structure, heterotrimeric G proteins are composed of 3 units; alpha, beta and gamma. The alpha subunit contains the guanine nucleotide binding site. GTP binding causes dissociation of the heterotrimer, liberating the individual subunits so that they can interact with downstream effector proteins. Forms a complex with CCDC88A/GIV and EGFR which leads to enhanced EGFR signaling and triggering of cell migration; ligand stimulation is required for recruitment of GNAI3 to the complex. Interacts (inactive GDP-bound form) with CCDC88A/GIV (via GBA motif); the interaction leads to activation of GNAI3. Interacts (inactive GDP-bound form) with CCDC88C/DAPLE (via GBA motif); the interaction leads to activation of GNAI3. Interacts (inactive GDP-bound form) with NUCB1 (via GBA motif) and NUCB2 (via GBA motif); the interaction leads to activation of GNAI3. Interacts (inactive GDP-bound form) with PLCD4 (via GBA motif); the interaction leads to activation of GNAI3. Interacts with INSR; the interaction is probably mediated by CCDC88A/GIV. Interacts with GPSM1. Interacts (GDP-bound form) with GPSM2 (via GoLoco domains). Does not interact with RGS2. Interacts with RGS8 and RGS10; this strongly enhances the intrinsic GTPase activity. Interacts with RGS16; this strongly enhances the intrinsic GTPase activity. Interacts with RGS12. Interacts (via active GTP- or inactive GDP-bound form) with RGS14. Interacts (via active GTP-bound form) with TRPC5 (via ANK repeats) in a homotetrameric ion channel; the interaction is direct and activates the channel activity. Post-translationally, (Microbial infection) Deamidated at Gln-204 by Photorhabdus asymbiotica toxin PAU_02230, blocking GTP hydrolysis of heterotrimeric GNAQ or GNA11 and G-alphai (GNAI1, GNAI2 or GNAI3) proteins, thereby activating RhoA.

Its subcellular location is the cytoplasm. It localises to the cell membrane. It is found in the cytoskeleton. The protein localises to the microtubule organizing center. The protein resides in the centrosome. Functionally, heterotrimeric guanine nucleotide-binding proteins (G proteins) function as transducers downstream of G protein-coupled receptors (GPCRs) in numerous signaling cascades. The alpha chain contains the guanine nucleotide binding site and alternates between an active, GTP-bound state and an inactive, GDP-bound state. Signaling by an activated GPCR promotes GDP release and GTP binding. The alpha subunit has a low GTPase activity that converts bound GTP to GDP, thereby terminating the signal. Both GDP release and GTP hydrolysis are modulated by numerous regulatory proteins. Signaling is mediated via effector proteins, such as adenylate cyclase. Inhibits adenylate cyclase activity, leading to decreased intracellular cAMP levels. Stimulates the activity of receptor-regulated K(+) channels. The active GTP-bound form prevents the association of RGS14 with centrosomes and is required for the translocation of RGS14 from the cytoplasm to the plasma membrane. May play a role in cell division. The active GTP-bound form activates the calcium permeant TRPC5 ion channels. This is Guanine nucleotide-binding protein G(i) subunit alpha-3 (GNAI3) from Homo sapiens (Human).